The sequence spans 427 residues: Flavohemoprotein (427 aa).

The 139-residue stretch at 30-168 (ELNESQKQYI…LAKILIDSEK (139 aa)) folds into the Globin domain. Position 114 (histidine 114) interacts with heme b. Catalysis depends on charge relay system residues tyrosine 124 and glutamate 167. Positions 176–427 (WNGFVEFKVT…QSEFFGPYIP (252 aa)) are reductase. The FAD-binding FR-type domain maps to 177–285 (NGFVEFKVTE…SPPAGNFVYK (109 aa)). FAD-binding positions include tyrosine 216 and 232-235 (REYS). Position 301-306 (301-306 (GIGITP)) interacts with NADP(+). 421–424 (FFGP) provides a ligand contact to FAD.

Belongs to the globin family. Two-domain flavohemoproteins subfamily. The protein in the C-terminal section; belongs to the flavoprotein pyridine nucleotide cytochrome reductase family. The cofactor is FAD. Heme b is required as a cofactor.

Its subcellular location is the cytoplasm. The protein localises to the nucleus. It catalyses the reaction 2 nitric oxide + NADPH + 2 O2 = 2 nitrate + NADP(+) + H(+). The enzyme catalyses 2 nitric oxide + NADH + 2 O2 = 2 nitrate + NAD(+) + H(+). Functionally, is involved in NO detoxification in an aerobic process, termed nitric oxide dioxygenase (NOD) reaction that utilizes O(2) and NAD(P)H to convert NO to nitrate, which protects the fungus from various noxious nitrogen compounds. Therefore, plays a central role in the inducible response to nitrosative stress. In terms of biological role, in the presence of oxygen and NADH, it has NADH oxidase activity, which leads to the generation of superoxide and H(2)O(2). Under anaerobic conditions, it also exhibits nitric oxide reductase and FAD reductase activities. However, all these reactions are much lower than NOD activity. This is Flavohemoprotein from Schizosaccharomyces pombe (strain 972 / ATCC 24843) (Fission yeast).